The primary structure comprises 337 residues: Probable tyrosine--tRNA ligase, cytoplasmic (337 aa).

Position 35 (Y35) interacts with L-tyrosine. A 'HIGH' region motif is present at residues 40-48; it reads ITGKPHIAY. 4 residues coordinate L-tyrosine: Y162, Q166, D169, and Q184. Residues 218-222 carry the 'KMSKS' region motif; the sequence is KMSSS.

The protein belongs to the class-I aminoacyl-tRNA synthetase family. Homodimer.

Its subcellular location is the cytoplasm. The enzyme catalyses tRNA(Tyr) + L-tyrosine + ATP = L-tyrosyl-tRNA(Tyr) + AMP + diphosphate + H(+). The polypeptide is Probable tyrosine--tRNA ligase, cytoplasmic (Encephalitozoon cuniculi (strain GB-M1) (Microsporidian parasite)).